The following is a 152-amino-acid chain: Large ribosomal subunit protein uL15 (152 aa).

The tract at residues M1–M57 is disordered. A compositionally biased stretch (basic residues) spans S14–R23. The segment covering I25–M37 has biased composition (gly residues).

This sequence belongs to the universal ribosomal protein uL15 family. In terms of assembly, part of the 50S ribosomal subunit.

Functionally, binds to the 23S rRNA. The polypeptide is Large ribosomal subunit protein uL15 (Prochlorococcus marinus (strain MIT 9312)).